A 412-amino-acid chain; its full sequence is Angiopoietin-related protein 4 (412 aa).

Residues 1–23 form the signal peptide; it reads MRSAPTARAALVLCAATAGLLSA. Residues 106-153 are a coiled coil; it reads ETLHSLQTQLKAQNSKIQQLFQKVAQQQRHLEKQHLRIQNLQGQLDHL. A glycan (N-linked (GlcNAc...) asparagine) is linked at N183. The 223-residue stretch at 185–407 folds into the Fibrinogen C-terminal domain; sequence SRLHRLPRDC…ATTMLIQPTV (223 aa). 2 cysteine pairs are disulfide-bonded: C194-C222 and C347-C360.

In terms of assembly, homooligomer; disulfide-linked via Cys residues in the N-terminal part of the protein. The homooligomer undergoes proteolytic processing to release the ANGPTL4 C-terminal chain, which circulates as a monomer. The homooligomer unprocessed form is able to interact with the extracellular matrix. Post-translationally, N-glycosylated. Forms disulfide-linked dimers and tetramers. In terms of processing, cleaved into a smaller N-terminal chain and a larger chain that contains the fibrinogen C-terminal domain; both cleaved and uncleaved forms are detected in the extracellular space. The cleaved form is not present within the cell.

The protein localises to the secreted. It is found in the extracellular space. It localises to the extracellular matrix. Functionally, mediates inactivation of the lipoprotein lipase LPL, and thereby plays a role in the regulation of triglyceride clearance from the blood serum and in lipid metabolism. May also play a role in regulating glucose homeostasis and insulin sensitivity. Inhibits proliferation, migration, and tubule formation of endothelial cells and reduces vascular leakage. Upon heterologous expression, inhibits the adhesion of endothelial cell to the extracellular matrix (ECM), and inhibits the reorganization of the actin cytoskeleton, formation of actin stress fibers and focal adhesions in endothelial cells that have adhered to ANGPTL4-containing ECM (in vitro). Depending on context, may modulate tumor-related angiogenesis. Its function is as follows. Mediates inactivation of the lipoprotein lipase LPL, and thereby plays an important role in the regulation of triglyceride clearance from the blood serum and in lipid metabolism. Has higher activity in LPL inactivation than the uncleaved protein. In Sus scrofa (Pig), this protein is Angiopoietin-related protein 4 (ANGPTL4).